The following is a 192-amino-acid chain: Protein GrpE (192 aa).

Residues 1–20 (MEERNEQVVEEVKEEVKEAQ) are compositionally biased toward basic and acidic residues. Positions 1–39 (MEERNEQVVEEVKEEVKEAQVEEAVTSEDSEESVEEKSE) are disordered. The segment covering 25-34 (VTSEDSEESV) has biased composition (acidic residues).

It belongs to the GrpE family. As to quaternary structure, homodimer.

The protein localises to the cytoplasm. Functionally, participates actively in the response to hyperosmotic and heat shock by preventing the aggregation of stress-denatured proteins, in association with DnaK and GrpE. It is the nucleotide exchange factor for DnaK and may function as a thermosensor. Unfolded proteins bind initially to DnaJ; upon interaction with the DnaJ-bound protein, DnaK hydrolyzes its bound ATP, resulting in the formation of a stable complex. GrpE releases ADP from DnaK; ATP binding to DnaK triggers the release of the substrate protein, thus completing the reaction cycle. Several rounds of ATP-dependent interactions between DnaJ, DnaK and GrpE are required for fully efficient folding. The protein is Protein GrpE of Bacillus cereus (strain ATCC 10987 / NRS 248).